A 912-amino-acid polypeptide reads, in one-letter code: Coiled-coil domain-containing protein 162 (912 aa).

2 coiled-coil regions span residues M1 to A35 and V220 to S276.

In Mus musculus (Mouse), this protein is Coiled-coil domain-containing protein 162.